Here is a 353-residue protein sequence, read N- to C-terminus: MVGDTLKLLSPLMTRYFFLLFYSTDSSDLNENQHPLDFDEMAFGKVKSGISFLIQTGVGILGNSFLLCFYNLILFTGHKLRPTDLILSHLALANSMVLFFKGIPQTMAAFGLKYLLNDTGCKFVFYYHRVGTRVSLSTICLLNGFQAIKLNPSICRWMEIKIRSPRFIDFCCLLCWVPHVLMNASVLLLVNGPLNSKNSSAKNNYGYCSYKASKRFSSLHAVLYFSPDFMSLGFMVWASGSMVFFLYRHKQQVQHNHSNRLSCRPSQETRATRTIMVLVSSFFVFYSVHSFLTIWTTVVANPGQWIVNNSVLVASYFPSRSPFVLIMSDTRISQFCFACRTRKTLFPNLVVMP.

Residues 1–56 (MVGDTLKLLSPLMTRYFFLLFYSTDSSDLNENQHPLDFDEMAFGKVKSGISFLIQT) lie on the Extracellular side of the membrane. The helical transmembrane segment at 57–77 (GVGILGNSFLLCFYNLILFTG) threads the bilayer. At 78-84 (HKLRPTD) the chain is on the cytoplasmic side. A helical membrane pass occupies residues 85–105 (LILSHLALANSMVLFFKGIPQ). Residues 106–132 (TMAAFGLKYLLNDTGCKFVFYYHRVGT) are Extracellular-facing. N-linked (GlcNAc...) asparagine glycosylation occurs at N117. The helical transmembrane segment at 133–153 (RVSLSTICLLNGFQAIKLNPS) threads the bilayer. At 154–169 (ICRWMEIKIRSPRFID) the chain is on the cytoplasmic side. The chain crosses the membrane as a helical span at residues 170–190 (FCCLLCWVPHVLMNASVLLLV). Residues 191–226 (NGPLNSKNSSAKNNYGYCSYKASKRFSSLHAVLYFS) are Extracellular-facing. An N-linked (GlcNAc...) asparagine glycan is attached at N198. A helical transmembrane segment spans residues 227-247 (PDFMSLGFMVWASGSMVFFLY). Over 248–274 (RHKQQVQHNHSNRLSCRPSQETRATRT) the chain is Cytoplasmic. The chain crosses the membrane as a helical span at residues 275 to 295 (IMVLVSSFFVFYSVHSFLTIW). The Extracellular segment spans residues 296–303 (TTVVANPG). Residues 304 to 324 (QWIVNNSVLVASYFPSRSPFV) traverse the membrane as a helical segment. The Cytoplasmic portion of the chain corresponds to 325–353 (LIMSDTRISQFCFACRTRKTLFPNLVVMP).

This sequence belongs to the G-protein coupled receptor 1 family.

Its subcellular location is the cell membrane. Functionally, putative pheromone receptor. This chain is Vomeronasal type-1 receptor 1 (VN1R1), found in Gorilla gorilla gorilla (Western lowland gorilla).